The following is a 247-amino-acid chain: Uridylate kinase (247 aa).

ATP is bound at residue 18–21 (KLSG). UMP is bound at residue Gly-60. ATP contacts are provided by Gly-61 and Arg-65. UMP contacts are provided by residues Asp-80 and 141–148 (TGNPFFTT). Residues Thr-168, Tyr-174, and Asp-177 each contribute to the ATP site.

This sequence belongs to the UMP kinase family. As to quaternary structure, homohexamer.

It localises to the cytoplasm. The catalysed reaction is UMP + ATP = UDP + ADP. It functions in the pathway pyrimidine metabolism; CTP biosynthesis via de novo pathway; UDP from UMP (UMPK route): step 1/1. Its activity is regulated as follows. Inhibited by UTP. Its function is as follows. Catalyzes the reversible phosphorylation of UMP to UDP. The chain is Uridylate kinase from Ectopseudomonas mendocina (strain ymp) (Pseudomonas mendocina).